The sequence spans 415 residues: Casein kinase 1-like protein 3 (415 aa).

The Protein kinase domain maps to 9 to 277 (YKLGRKIGGG…FLKRLFRDLF (269 aa)). Residues 15–23 (IGGGSFGEI) and lysine 38 contribute to the ATP site. Aspartate 128 acts as the Proton acceptor in catalysis. Composition is skewed to polar residues over residues 303–314 (NQSQAVPGSSNP) and 373–415 (NMPS…SPEK). Disordered regions lie at residues 303–330 (NQSQ…GPNI) and 344–415 (NAIG…SPEK).

Belongs to the protein kinase superfamily. CK1 Ser/Thr protein kinase family. Casein kinase I subfamily. In terms of processing, slightly autophosphorylated. As to expression, expressed in seedlings, stems, leaves and flowers.

The protein localises to the cytoplasm. Its subcellular location is the nucleus. It carries out the reaction L-seryl-[protein] + ATP = O-phospho-L-seryl-[protein] + ADP + H(+). The enzyme catalyses L-threonyl-[protein] + ATP = O-phospho-L-threonyl-[protein] + ADP + H(+). Protein kinase involved in blue light responses (e.g. hypocotyl elongation and flowering) by phosphorylating CRY2 to reduce its stability. The chain is Casein kinase 1-like protein 3 from Arabidopsis thaliana (Mouse-ear cress).